An 89-amino-acid chain; its full sequence is Alpha-latrotoxin associated low molecular weight protein SGV242-280 (89 aa).

A signal peptide spans 1 to 18 (MSKLHFLILLSVIVSVFC).

Belongs to the arthropod CHH/MIH/GIH/VIH hormone family. In terms of tissue distribution, expressed by the venom gland.

The protein localises to the secreted. Its function is as follows. May increase the toxicity of alpha-latrotoxin and/or other venom components. Is non-toxic to mice and to the cockroach Periplaneta americana. This is Alpha-latrotoxin associated low molecular weight protein SGV242-280 from Steatoda grossa (False black widow).